The following is a 151-amino-acid chain: Transcription antitermination protein NusB (151 aa).

This sequence belongs to the NusB family.

Functionally, involved in transcription antitermination. Required for transcription of ribosomal RNA (rRNA) genes. Binds specifically to the boxA antiterminator sequence of the ribosomal RNA (rrn) operons. The polypeptide is Transcription antitermination protein NusB (Hamiltonella defensa subsp. Acyrthosiphon pisum (strain 5AT)).